We begin with the raw amino-acid sequence, 610 residues long: Zinc finger protein 823 (610 aa).

In terms of domain architecture, KRAB spans 4-97 (VAFEDVAVNF…VNKNTPRVNP (94 aa)). C2H2-type zinc fingers lie at residues 164 to 186 (FDCK…MAAH), 192 to 214 (YKCK…ERTH), 220 to 242 (YECK…ERIH), 248 to 270 (YECK…ERTH), 276 to 298 (YKCT…ERTH), 304 to 326 (YACK…MIRH), 332 to 354 (HKCK…ETTH), 360 to 382 (YECK…MITH), 388 to 410 (QKCK…ERTH), and 416 to 438 (YQCK…EATH). A C2H2-type 11; atypical zinc finger spans residues 444–465 (YKCQCGKAFSDLSSFQNHETTH). C2H2-type zinc fingers lie at residues 471–493 (YECK…KRTH), 499–521 (YECK…ERIH), 527–549 (YECK…ERIH), 555–577 (YECL…EKTH), and 583–605 (YECK…KRTH).

This sequence belongs to the krueppel C2H2-type zinc-finger protein family.

The protein resides in the nucleus. Its function is as follows. May be involved in transcriptional regulation. This chain is Zinc finger protein 823 (ZNF823), found in Homo sapiens (Human).